The sequence spans 313 residues: 4-hydroxy-3-methylbut-2-enyl diphosphate reductase (313 aa).

C13 provides a ligand contact to [4Fe-4S] cluster. 2 residues coordinate (2E)-4-hydroxy-3-methylbut-2-enyl diphosphate: H41 and H75. 2 residues coordinate dimethylallyl diphosphate: H41 and H75. Isopentenyl diphosphate is bound by residues H41 and H75. C97 contributes to the [4Fe-4S] cluster binding site. H125 lines the (2E)-4-hydroxy-3-methylbut-2-enyl diphosphate pocket. A dimethylallyl diphosphate-binding site is contributed by H125. Position 125 (H125) interacts with isopentenyl diphosphate. Residue E127 is the Proton donor of the active site. T168 contacts (2E)-4-hydroxy-3-methylbut-2-enyl diphosphate. C218 is a [4Fe-4S] cluster binding site. Residues S246, S247, N248, and S295 each contribute to the (2E)-4-hydroxy-3-methylbut-2-enyl diphosphate site. Positions 246, 247, 248, and 295 each coordinate dimethylallyl diphosphate. Isopentenyl diphosphate-binding residues include S246, S247, N248, and S295.

This sequence belongs to the IspH family. [4Fe-4S] cluster serves as cofactor.

It carries out the reaction isopentenyl diphosphate + 2 oxidized [2Fe-2S]-[ferredoxin] + H2O = (2E)-4-hydroxy-3-methylbut-2-enyl diphosphate + 2 reduced [2Fe-2S]-[ferredoxin] + 2 H(+). The enzyme catalyses dimethylallyl diphosphate + 2 oxidized [2Fe-2S]-[ferredoxin] + H2O = (2E)-4-hydroxy-3-methylbut-2-enyl diphosphate + 2 reduced [2Fe-2S]-[ferredoxin] + 2 H(+). It participates in isoprenoid biosynthesis; dimethylallyl diphosphate biosynthesis; dimethylallyl diphosphate from (2E)-4-hydroxy-3-methylbutenyl diphosphate: step 1/1. Its pathway is isoprenoid biosynthesis; isopentenyl diphosphate biosynthesis via DXP pathway; isopentenyl diphosphate from 1-deoxy-D-xylulose 5-phosphate: step 6/6. Functionally, catalyzes the conversion of 1-hydroxy-2-methyl-2-(E)-butenyl 4-diphosphate (HMBPP) into a mixture of isopentenyl diphosphate (IPP) and dimethylallyl diphosphate (DMAPP). Acts in the terminal step of the DOXP/MEP pathway for isoprenoid precursor biosynthesis. The protein is 4-hydroxy-3-methylbut-2-enyl diphosphate reductase of Chlorobium phaeovibrioides (strain DSM 265 / 1930) (Prosthecochloris vibrioformis (strain DSM 265)).